The chain runs to 360 residues: Biotin synthase (360 aa).

A disordered region spans residues Met1–Ala25. In terms of domain architecture, Radical SAM core spans Asn58–Arg285. The [4Fe-4S] cluster site is built by Cys73, Cys77, and Cys80. Positions 117, 148, 208, and 280 each coordinate [2Fe-2S] cluster. A disordered region spans residues Gln340–Asp360.

This sequence belongs to the radical SAM superfamily. Biotin synthase family. As to quaternary structure, homodimer. The cofactor is [4Fe-4S] cluster. It depends on [2Fe-2S] cluster as a cofactor.

It catalyses the reaction (4R,5S)-dethiobiotin + (sulfur carrier)-SH + 2 reduced [2Fe-2S]-[ferredoxin] + 2 S-adenosyl-L-methionine = (sulfur carrier)-H + biotin + 2 5'-deoxyadenosine + 2 L-methionine + 2 oxidized [2Fe-2S]-[ferredoxin]. It functions in the pathway cofactor biosynthesis; biotin biosynthesis; biotin from 7,8-diaminononanoate: step 2/2. In terms of biological role, catalyzes the conversion of dethiobiotin (DTB) to biotin by the insertion of a sulfur atom into dethiobiotin via a radical-based mechanism. The sequence is that of Biotin synthase from Ralstonia nicotianae (strain ATCC BAA-1114 / GMI1000) (Ralstonia solanacearum).